Here is a 68-residue protein sequence, read N- to C-terminus: Large ribosomal subunit protein uL30 (68 aa).

This sequence belongs to the universal ribosomal protein uL30 family. Part of the 50S ribosomal subunit.

This is Large ribosomal subunit protein uL30 from Bartonella tribocorum (strain CIP 105476 / IBS 506).